The sequence spans 486 residues: 23S rRNA (uracil(1939)-C(5))-methyltransferase RlmD (486 aa).

The 62-residue stretch at 10–71 (TVKAPEYLPD…SSFEKAVVMA (62 aa)) folds into the TRAM domain. Residues cysteine 84, cysteine 94, cysteine 97, and cysteine 176 each contribute to the [4Fe-4S] cluster site. Positions 285, 314, 319, 335, 370, and 391 each coordinate S-adenosyl-L-methionine. Cysteine 442 serves as the catalytic Nucleophile.

It belongs to the class I-like SAM-binding methyltransferase superfamily. RNA M5U methyltransferase family. RlmD subfamily.

It carries out the reaction uridine(1939) in 23S rRNA + S-adenosyl-L-methionine = 5-methyluridine(1939) in 23S rRNA + S-adenosyl-L-homocysteine + H(+). Functionally, catalyzes the formation of 5-methyl-uridine at position 1939 (m5U1939) in 23S rRNA. The sequence is that of 23S rRNA (uracil(1939)-C(5))-methyltransferase RlmD from Polaromonas sp. (strain JS666 / ATCC BAA-500).